Here is a 249-residue protein sequence, read N- to C-terminus: Small ribosomal subunit protein uS4m (249 aa).

The 61-residue stretch at 133 to 193 (RRLDIIIYRA…PEIVNLLRNQ (61 aa)) folds into the S4 RNA-binding domain.

This sequence belongs to the universal ribosomal protein uS4 family.

It localises to the mitochondrion. The protein is Small ribosomal subunit protein uS4m (RPS4) of Reclinomonas americana.